Consider the following 701-residue polypeptide: Glycine--tRNA ligase beta subunit (701 aa).

This sequence belongs to the class-II aminoacyl-tRNA synthetase family. Tetramer of two alpha and two beta subunits.

It is found in the cytoplasm. It catalyses the reaction tRNA(Gly) + glycine + ATP = glycyl-tRNA(Gly) + AMP + diphosphate. The polypeptide is Glycine--tRNA ligase beta subunit (Helicobacter pylori (strain HPAG1)).